We begin with the raw amino-acid sequence, 99 residues long: Large ribosomal subunit protein bL21 (99 aa).

This sequence belongs to the bacterial ribosomal protein bL21 family. Part of the 50S ribosomal subunit. Contacts protein L20.

Its function is as follows. This protein binds to 23S rRNA in the presence of protein L20. The chain is Large ribosomal subunit protein bL21 from Mycoplasmopsis pulmonis (strain UAB CTIP) (Mycoplasma pulmonis).